The chain runs to 357 residues: Aminomethyltransferase (357 aa).

Belongs to the GcvT family. The glycine cleavage system is composed of four proteins: P, T, L and H.

The enzyme catalyses N(6)-[(R)-S(8)-aminomethyldihydrolipoyl]-L-lysyl-[protein] + (6S)-5,6,7,8-tetrahydrofolate = N(6)-[(R)-dihydrolipoyl]-L-lysyl-[protein] + (6R)-5,10-methylene-5,6,7,8-tetrahydrofolate + NH4(+). The glycine cleavage system catalyzes the degradation of glycine. The protein is Aminomethyltransferase of Halothermothrix orenii (strain H 168 / OCM 544 / DSM 9562).